The chain runs to 285 residues: Secreted alkaline triacylglycerol lipase (285 aa).

Residues 1–20 form the signal peptide; the sequence is MLFNYQSLLVGVSLISQALS. Catalysis depends on Ser-159, which acts as the Nucleophile. Active-site charge relay system residues include Asp-215 and His-268.

The protein belongs to the AB hydrolase superfamily. FaeA family.

The protein resides in the secreted. The enzyme catalyses a triacylglycerol + H2O = a diacylglycerol + a fatty acid + H(+). Secreted alkaline lipase that hydrolyzes acylglycerol lipids such as triacylglycerols and consequently releases free fatty acid. Is able to hydrolyze tributyrin (1,2,3-tributyryl-glycerin). The polypeptide is Secreted alkaline triacylglycerol lipase (Penicillium cyclopium).